The primary structure comprises 161 residues: NADH:FMN oxidoreductase (161 aa).

Residues Asp30, 37–40, 54–61, Ala88, Arg94, and Phe151 each bind FMN; these read AAST and CVQNSSTT.

The protein belongs to the non-flavoprotein flavin reductase family.

The protein localises to the cytoplasm. The catalysed reaction is FMNH2 + NAD(+) = FMN + NADH + 2 H(+). It catalyses the reaction FADH2 + NAD(+) = FAD + NADH + 2 H(+). It participates in sulfur metabolism; dibenzothiophene degradation. An NADH:FMN oxidoreductase which supplies reduced FMN for the '4S' desulfurization pathway that removes covalently bound sulfur from dibenzothiophene (DBT) without breaking carbon-carbon bonds. Can also use FAD. Provides DszC and probably also DszA (DBT-monooxygenase and DBTO2-monooxygenase respectively) with reduced flavin (FMN and/or FAD). This Mycolicibacterium goodii (Mycobacterium goodii) protein is NADH:FMN oxidoreductase.